The primary structure comprises 241 residues: Putative CRISPR-associated endoribonuclease-like protein Cas6 (241 aa).

It belongs to the CRISPR-associated protein Cas6/Cse3/CasE family. In terms of assembly, binds crRNA.

Functionally, CRISPR (clustered regularly interspaced short palindromic repeat), is an adaptive immune system that provides protection against mobile genetic elements (viruses, transposable elements and conjugative plasmids). CRISPR clusters contain sequences complementary to antecedent mobile elements and target invading nucleic acids. CRISPR clusters are transcribed and processed into CRISPR RNA (crRNA), also called psiRNA (prokaryotic silencing) in this organism (Potential). The protein is Putative CRISPR-associated endoribonuclease-like protein Cas6 (cas6b) of Pyrococcus furiosus (strain ATCC 43587 / DSM 3638 / JCM 8422 / Vc1).